Consider the following 257-residue polypeptide: E3 ubiquitin-protein ligase RNF170 (257 aa).

The Lumenal segment spans residues 1–24; sequence MADNQEERPHFPLDEGSIIEGVSD. The chain crosses the membrane as a helical span at residues 25-45; the sequence is QVIVVVLLSFVAVGSLIYLLL. Over 46–200 the chain is Cytoplasmic; that stretch reads RNDEQNIHPE…GGLFWMFRIR (155 aa). The RING-type zinc finger occupies 87-130; the sequence is CPVCLQQATFPVETNCGHLFCGSCIIAYWRYGTWLGAINCPICR. A helical membrane pass occupies residues 201–221; that stretch reads IVLCLLGALLYLVSPLDIIPE. A topological domain (lumenal) is located at residue Ala-222. The helical transmembrane segment at 223–243 threads the bilayer; the sequence is LFGILGFLDDLFVLFLLLIYI. Topologically, residues 244–257 are cytoplasmic; that stretch reads SIMYREVVTQRLYR.

Its subcellular location is the endoplasmic reticulum membrane. It carries out the reaction S-ubiquitinyl-[E2 ubiquitin-conjugating enzyme]-L-cysteine + [acceptor protein]-L-lysine = [E2 ubiquitin-conjugating enzyme]-L-cysteine + N(6)-ubiquitinyl-[acceptor protein]-L-lysine.. Its pathway is protein modification; protein ubiquitination. Its function is as follows. E3 ubiquitin-protein ligase that plays an essential role in stimulus-induced inositol 1,4,5-trisphosphate receptor (ITPR) ubiquitination and degradation via the endoplasmic reticulum-associated degradation (ERAD) pathway. Also involved in ITPR turnover in resting cells. This is E3 ubiquitin-protein ligase RNF170 (rnf170) from Xenopus laevis (African clawed frog).